The primary structure comprises 402 residues: Enoyl-[acyl-carrier-protein] reductase [NADH] (402 aa).

NAD(+) contacts are provided by residues glycine 48–tyrosine 53, phenylalanine 74–glutamate 75, aspartate 111–alanine 112, and leucine 140–alanine 141. Tyrosine 226 lines the substrate pocket. Tyrosine 236 serves as the catalytic Proton donor. Residues lysine 245 and valine 274–threonine 276 each bind NAD(+).

The protein belongs to the TER reductase family. In terms of assembly, monomer.

It carries out the reaction a 2,3-saturated acyl-[ACP] + NAD(+) = a (2E)-enoyl-[ACP] + NADH + H(+). It catalyses the reaction a 2,3-saturated acyl-CoA + NAD(+) = a (2E)-enoyl-CoA + NADH + H(+). It participates in lipid metabolism; fatty acid biosynthesis. Involved in the final reduction of the elongation cycle of fatty acid synthesis (FAS II). Catalyzes the reduction of a carbon-carbon double bond in an enoyl moiety that is covalently linked to an acyl carrier protein (ACP). It can also use crotonyl-CoA. The polypeptide is Enoyl-[acyl-carrier-protein] reductase [NADH] (Xanthomonas oryzae pv. oryzae (strain MAFF 311018)).